The sequence spans 476 residues: Serine protease HTRA1B (476 aa).

An N-terminal signal peptide occupies residues 1 to 19 (MRLLILCASIILVPLLCDA). The 85-residue stretch at 25-109 (YVIGCPERCD…RGKTGVCVCK (85 aa)) folds into the IGFBP N-terminal domain. Disulfide bonds link cysteine 29-cysteine 54, cysteine 33-cysteine 56, cysteine 38-cysteine 57, cysteine 45-cysteine 60, cysteine 68-cysteine 85, and cysteine 79-cysteine 106. Positions 94–153 (TTTVRRRGKTGVCVCKSSEPVCGSDGVSYRNICELKRVSNRAQKLQQPPIIFIQRGACGK) constitute a Kazal-like domain. The interval 200–360 (GSGFVVSEDG…IPSDKIRQFL (161 aa)) is serine protease. Residues histidine 216, aspartate 246, and serine 324 each act as charge relay system in the active site. In terms of domain architecture, PDZ spans 361–463 (AESHDRQAKG…LRAVVRRGNE (103 aa)).

The protein belongs to the peptidase S1C family. In terms of assembly, forms homotrimers. In the presence of substrate, may form higher-order multimers in a PDZ-independent manner.

The protein localises to the secreted. It localises to the cytoplasm. The protein resides in the cytosol. Its function is as follows. Serine protease with a variety of targets, including extracellular matrix proteins and proteoglycans. Through cleavage of proteoglycans, may release soluble FGF-glycosaminoglycan complexes that promote the range and intensity of FGF signals in the extracellular space. Regulates the availability of insulin-like growth factors (IGFs) by cleaving IGF-binding proteins. Inhibits signaling mediated by TGF-beta family members. Consequently, may regulate many physiological processes. Intracellularly, degrades TSC2, leading to the activation of TSC2 downstream targets. This is Serine protease HTRA1B (htra1b) from Danio rerio (Zebrafish).